The primary structure comprises 388 residues: Protein phosphatase 2C 57 (388 aa).

The PPM-type phosphatase domain occupies 59–348 (RWGYTSVQGF…DNISIIIADL (290 aa)). Asp93, Gly94, Asp296, and Asp339 together coordinate Mn(2+). Residues 363 to 383 (VVVELVQAATTIGLVTVGIWM) form a helical membrane-spanning segment.

This sequence belongs to the PP2C family. The cofactor is Mg(2+). Mn(2+) is required as a cofactor.

Its subcellular location is the membrane. The protein resides in the plastid. It is found in the chloroplast stroma. It catalyses the reaction O-phospho-L-seryl-[protein] + H2O = L-seryl-[protein] + phosphate. The enzyme catalyses O-phospho-L-threonyl-[protein] + H2O = L-threonyl-[protein] + phosphate. Its function is as follows. Protein phosphatase specifically required for efficient dephosphorylation of the light-harvesting complex II outer antennae (LCHII) and transition from state 2 to state 1. State transition plays a central role in response to environmental changes and allows to adjust to changing light conditions via the redistribution of light excitation energy between photosystem II (PSII) and photosystem I (PSI) in a short time by relocating LHCII proteins. Mainly responsible for the dephosphorylation of Lhcb1 and Lhcb2 but not of the photosystem II core proteins. In Arabidopsis thaliana (Mouse-ear cress), this protein is Protein phosphatase 2C 57.